The following is a 183-amino-acid chain: Heavy metal-associated isoprenylated plant protein 44 (183 aa).

The HMA domain maps to 50–113; that stretch reads LQTVELKVRM…AVRRAGKRAE (64 aa). Residues cysteine 61 and cysteine 64 each contribute to the a metal cation site. At cysteine 180 the chain carries Cysteine methyl ester. Cysteine 180 is lipidated: S-farnesyl cysteine. Residues 181-183 constitute a propeptide, removed in mature form; it reads RLM.

Belongs to the HIPP family.

Functionally, heavy-metal-binding protein. The chain is Heavy metal-associated isoprenylated plant protein 44 from Arabidopsis thaliana (Mouse-ear cress).